Here is a 154-residue protein sequence, read N- to C-terminus: Ascorbate-specific PTS system EIIA component (154 aa).

In terms of domain architecture, PTS EIIA type-2 spans 6–150; sequence SLAVNKSIRL…QEVLDLIDRT (145 aa). Residue His68 is the Tele-phosphohistidine intermediate of the active site. Position 68 is a phosphohistidine (His68).

The protein localises to the cytoplasm. Functionally, the phosphoenolpyruvate-dependent sugar phosphotransferase system (sugar PTS), a major carbohydrate active transport system, catalyzes the phosphorylation of incoming sugar substrates concomitantly with their translocation across the cell membrane. The enzyme II UlaABC PTS system is involved in ascorbate transport. In Shigella dysenteriae serotype 1 (strain Sd197), this protein is Ascorbate-specific PTS system EIIA component (ulaC).